A 297-amino-acid chain; its full sequence is tRNA dimethylallyltransferase (297 aa).

15–22 contributes to the ATP binding site; the sequence is GPTASGKS. Residue 17-22 participates in substrate binding; the sequence is TASGKS. Interaction with substrate tRNA stretches follow at residues 40–43 and 164–168; these read DSMQ and QRIVR.

It belongs to the IPP transferase family. Monomer. Requires Mg(2+) as cofactor.

It catalyses the reaction adenosine(37) in tRNA + dimethylallyl diphosphate = N(6)-dimethylallyladenosine(37) in tRNA + diphosphate. Its function is as follows. Catalyzes the transfer of a dimethylallyl group onto the adenine at position 37 in tRNAs that read codons beginning with uridine, leading to the formation of N6-(dimethylallyl)adenosine (i(6)A). This Rhizobium etli (strain CIAT 652) protein is tRNA dimethylallyltransferase.